The chain runs to 303 residues: Probable cell division protein WhiA (303 aa).

Positions 272 to 303 (SIQQLADSLSTPLTKSGVNHRLRKINKIADEL) form a DNA-binding region, H-T-H motif.

Belongs to the WhiA family.

Involved in cell division and chromosome segregation. The chain is Probable cell division protein WhiA from Streptococcus pneumoniae serotype 4 (strain ATCC BAA-334 / TIGR4).